We begin with the raw amino-acid sequence, 163 residues long: Small ribosomal subunit protein uS5 (163 aa).

Residues 11–74 (LTDRVVHINR…EQAKKNLIRV (64 aa)) enclose the S5 DRBM domain.

The protein belongs to the universal ribosomal protein uS5 family. As to quaternary structure, part of the 30S ribosomal subunit. Contacts proteins S4 and S8.

Its function is as follows. With S4 and S12 plays an important role in translational accuracy. Functionally, located at the back of the 30S subunit body where it stabilizes the conformation of the head with respect to the body. The polypeptide is Small ribosomal subunit protein uS5 (Syntrophotalea carbinolica (strain DSM 2380 / NBRC 103641 / GraBd1) (Pelobacter carbinolicus)).